A 638-amino-acid chain; its full sequence is LEAF RUST 10 DISEASE-RESISTANCE LOCUS RECEPTOR-LIKE PROTEIN KINASE-like 2.1 (638 aa).

Residues 1 to 29 form the signal peptide; the sequence is MINLSLYQTNSLSYTIIWMLFVIPSCVLS. Over 30–264 the chain is Extracellular; the sequence is VDERQKHCSP…EHTCGKMGIG (235 aa). 5 N-linked (GlcNAc...) asparagine glycosylation sites follow: Asn-69, Asn-114, Asn-136, Asn-204, and Asn-239. The helical transmembrane segment at 265 to 285 threads the bilayer; that stretch reads IGLGCGFLGATLITVCLLCFF. At 286 to 638 the chain is on the cytoplasmic side; sequence FQKRRTSHHL…YTEVFIGSTS (353 aa). The Protein kinase domain maps to 321 to 609; sequence KLFSHTLGKG…VLEVPPKPSI (289 aa). ATP contacts are provided by residues 327–335 and Lys-349; that span reads LGKGGFGTV. A Phosphotyrosine modification is found at Tyr-393. The Proton acceptor role is filled by Asp-444. Thr-484 is subject to Phosphothreonine.

This sequence belongs to the protein kinase superfamily. Ser/Thr protein kinase family.

Its subcellular location is the membrane. The catalysed reaction is L-seryl-[protein] + ATP = O-phospho-L-seryl-[protein] + ADP + H(+). The enzyme catalyses L-threonyl-[protein] + ATP = O-phospho-L-threonyl-[protein] + ADP + H(+). The protein is LEAF RUST 10 DISEASE-RESISTANCE LOCUS RECEPTOR-LIKE PROTEIN KINASE-like 2.1 of Arabidopsis thaliana (Mouse-ear cress).